A 425-amino-acid chain; its full sequence is MLDIKFIRSNPDVVRRAIELKGEKADLDRLLLLDEKRREMLVELEALKNKRNTESDNIARLKREGKDASELIAKMKELSDKIKDMEQELREIEEEMEKILWTIPNIPHESVPIGESDEDNVEVRRWGEPRKFDFEPKPHWEIGEALGILDFEAASRVTGSRFVFYKGLGARLERALINFMLDLHIEKHGYKEVFPPFLVHRRSMFGTGQLPKFEEDAFKVEGTDYFLIPTAEVPVTNLYRETIIDGEQLPIYHCAYSACFRQEAGAAGRDTRGLIRQHQFDKVELVKFTEPDKSYEELEKMTRDAEEVLQALGLPYRVVAICTGDLGFTASKKYDIEVWMPSYGRYVEISSCSNCEDFQARRANIRYRPKGGGKLQYVHTLNGSGVAVGRTFAAILENYQQEDGSVVVPEVLRPYMKVDVIRKEE.

Residue 230–232 participates in L-serine binding; the sequence is TAE. ATP is bound at residue 261-263; sequence RQE. E284 contributes to the L-serine binding site. Residue 348–351 participates in ATP binding; sequence EISS. L-serine is bound at residue S384.

Belongs to the class-II aminoacyl-tRNA synthetase family. Type-1 seryl-tRNA synthetase subfamily. As to quaternary structure, homodimer. The tRNA molecule binds across the dimer.

It is found in the cytoplasm. The catalysed reaction is tRNA(Ser) + L-serine + ATP = L-seryl-tRNA(Ser) + AMP + diphosphate + H(+). It carries out the reaction tRNA(Sec) + L-serine + ATP = L-seryl-tRNA(Sec) + AMP + diphosphate + H(+). It functions in the pathway aminoacyl-tRNA biosynthesis; selenocysteinyl-tRNA(Sec) biosynthesis; L-seryl-tRNA(Sec) from L-serine and tRNA(Sec): step 1/1. Functionally, catalyzes the attachment of serine to tRNA(Ser). Is also able to aminoacylate tRNA(Sec) with serine, to form the misacylated tRNA L-seryl-tRNA(Sec), which will be further converted into selenocysteinyl-tRNA(Sec). This chain is Serine--tRNA ligase, found in Caldanaerobacter subterraneus subsp. tengcongensis (strain DSM 15242 / JCM 11007 / NBRC 100824 / MB4) (Thermoanaerobacter tengcongensis).